A 580-amino-acid chain; its full sequence is N(6)-adenosine-methyltransferase catalytic subunit METTL3 (580 aa).

Positions 1–70 are disordered; sequence MSDTWSSIQA…PKPSTTSVAP (70 aa). Ser-2 is subject to N-acetylserine; alternate. Ser-2 is modified (phosphoserine; alternate). The segment covering 28–37 has biased composition (basic and acidic residues); sequence QDSGHLDLRN. Residues Ser-43, Ser-48, and Ser-50 each carry the phosphoserine modification. Residues 55 to 67 are compositionally biased toward low complexity; the sequence is APTSSGPKPSTTS. Glycyl lysine isopeptide (Lys-Gly) (interchain with G-Cter in SUMO1) cross-links involve residues Lys-177, Lys-211, Lys-212, and Lys-215. The disordered stretch occupies residues 198-217; that stretch reads LASSASEPAKEPAKKSRKHA. Positions 210 to 215 match the Nuclear localization signal motif; sequence AKKSRK. 3 positions are modified to phosphoserine: Ser-219, Ser-243, and Ser-350. S-adenosyl-L-methionine is bound by residues 377 to 378 and Asp-395; that span reads DI. The segment at 396 to 410 is gate loop 1; the sequence is PPWDIHMELPYGTLT. Interaction with METTL14 regions lie at residues 450 to 454 and 464 to 480; these read ERVDE and QRIIRTGRTGHWLNHGK. Positions 462–479 are interphase loop; the sequence is QLQRIIRTGRTGHWLNHG. Residues 465–478 are positively charged region required for RNA-binding; it reads RIIRTGRTGHWLNH. Residues 507-515 are gate loop 2; the sequence is VRSTSHKPD. S-adenosyl-L-methionine contacts are provided by residues Lys-513, 536-539, and 549-550; these read RPHN and NQ.

It belongs to the MT-A70-like family. Heterodimer; heterodimerizes with METTL14 to form an antiparallel heterodimer that constitutes an active methyltransferase. Component of the WMM complex, a N6-methyltransferase complex composed of a catalytic subcomplex, named MAC, and of an associated subcomplex, named MACOM. The MAC subcomplex is composed of METTL3 and METTL14. The MACOM subcomplex is composed of WTAP, ZC3H13, CBLL1/HAKAI, VIRMA, and, in some cases of RBM15 (RBM15 or RBM15B). Interacts with NCBP1/CBP80. Interacts with EIF4E. Interacts with EIF3B. Sumoylation inhibits the N6-adenosine-methyltransferase activity. Sumoylation does not affect subcellular location or interaction with METTL14. Desumoylated by SENP1. In terms of tissue distribution, present in both germ cells and somatic cells during testis development (at protein level).

The protein localises to the nucleus. It is found in the nucleus speckle. It localises to the cytoplasm. The enzyme catalyses an adenosine in mRNA + S-adenosyl-L-methionine = an N(6)-methyladenosine in mRNA + S-adenosyl-L-homocysteine + H(+). Its activity is regulated as follows. Methyltransferase activity is regulated by miRNAs via a sequence pairing mechanism. Methyltransferase activity is inhibited by sumoylation. In terms of biological role, the METTL3-METTL14 heterodimer forms a N6-methyltransferase complex that methylates adenosine residues at the N(6) position of some RNAs and regulates various processes such as the circadian clock, differentiation of embryonic and hematopoietic stem cells, cortical neurogenesis, response to DNA damage, differentiation of T-cells and primary miRNA processing. In the heterodimer formed with METTL14, METTL3 constitutes the catalytic core. N6-methyladenosine (m6A), which takes place at the 5'-[AG]GAC-3' consensus sites of some mRNAs, plays a role in mRNA stability, processing, translation efficiency and editing. M6A acts as a key regulator of mRNA stability: methylation is completed upon the release of mRNA into the nucleoplasm and promotes mRNA destabilization and degradation. In embryonic stem cells (ESCs), m6A methylation of mRNAs encoding key naive pluripotency-promoting transcripts results in transcript destabilization, promoting differentiation of ESCs. M6A regulates the length of the circadian clock: acts as an early pace-setter in the circadian loop by putting mRNA production on a fast-track for facilitating nuclear processing, thereby providing an early point of control in setting the dynamics of the feedback loop. M6A also regulates circadian regulation of hepatic lipid metabolism. M6A regulates spermatogonial differentiation and meiosis and is essential for male fertility and spermatogenesis. Also required for oogenesis. Involved in the response to DNA damage: in response to ultraviolet irradiation, METTL3 rapidly catalyzes the formation of m6A on poly(A) transcripts at DNA damage sites, leading to the recruitment of POLK to DNA damage sites. M6A is also required for T-cell homeostasis and differentiation: m6A methylation of transcripts of SOCS family members (SOCS1, SOCS3 and CISH) in naive T-cells promotes mRNA destabilization and degradation, promoting T-cell differentiation. Inhibits the type I interferon response by mediating m6A methylation of IFNB. M6A also regulates cortical neurogenesis: m6A methylation of transcripts related to transcription factors, neural stem cells, the cell cycle and neuronal differentiation during brain development promotes their destabilization and decay, promoting differentiation of radial glial cells. M6A also takes place in other RNA molecules, such as primary miRNA (pri-miRNAs). Mediates m6A methylation of Xist RNA, thereby participating in random X inactivation: m6A methylation of Xist leads to target YTHDC1 reader on Xist and promote transcription repression activity of Xist. METTL3 mediates methylation of pri-miRNAs, marking them for recognition and processing by DGCR8. Acts as a positive regulator of mRNA translation independently of the methyltransferase activity: promotes translation by interacting with the translation initiation machinery in the cytoplasm. This chain is N(6)-adenosine-methyltransferase catalytic subunit METTL3, found in Mus musculus (Mouse).